Reading from the N-terminus, the 353-residue chain is Guanine nucleotide-binding protein subunit alpha (353 aa).

The interval 1–25 is disordered; that stretch reads MGCGMSTEDKEGKARNEEIENQLKR. G2 carries the N-myristoyl glycine lipid modification. The S-palmitoyl cysteine moiety is linked to residue C3. Residues 7-25 are compositionally biased toward basic and acidic residues; it reads TEDKEGKARNEEIENQLKR. The G-alpha domain maps to 32-353; that stretch reads NEIKMLLLGA…QENLRLCGLI (322 aa). The interval 35 to 48 is G1 motif; that stretch reads KMLLLGAGESGKST. 14 residues coordinate GTP: E43, S44, G45, K46, S47, T48, D150, L175, T181, G203, N269, K270, D272, and A325. Residue S47 participates in Mg(2+) binding. The interval 173–181 is G2 motif; that stretch reads DVLRSRVKT. Residue T181 participates in Mg(2+) binding. The interval 196-205 is G3 motif; the sequence is YRMFDVGGQR. Positions 265–272 are G4 motif; it reads ILFLNKID. Residues 323 to 328 are G5 motif; that stretch reads TCATDT.

The protein belongs to the G-alpha family. G(q) subfamily. G proteins are composed of 3 units; alpha, beta and gamma. The alpha chain contains the guanine nucleotide binding site. Mg(2+) is required as a cofactor.

Functionally, guanine nucleotide-binding proteins (G proteins) are involved as modulators or transducers in various transmembrane signaling systems. In Emericella nidulans (strain FGSC A4 / ATCC 38163 / CBS 112.46 / NRRL 194 / M139) (Aspergillus nidulans), this protein is Guanine nucleotide-binding protein subunit alpha (fadA).